Consider the following 357-residue polypeptide: Peptide chain release factor 1 (357 aa).

Q234 is subject to N5-methylglutamine. Residues 249–308 (PSGVEVSCQDEKSQHKNRSKAMRVLRSRVYEKKREEQQAEREEARRSMVGSGDRSAKIRT) are disordered. The segment covering 263-274 (HKNRSKAMRVLR) has biased composition (basic residues). Residues 276-294 (RVYEKKREEQQAEREEARR) show a composition bias toward basic and acidic residues.

This sequence belongs to the prokaryotic/mitochondrial release factor family. Post-translationally, methylated by PrmC. Methylation increases the termination efficiency of RF1.

It is found in the cytoplasm. Peptide chain release factor 1 directs the termination of translation in response to the peptide chain termination codons UAG and UAA. The sequence is that of Peptide chain release factor 1 from Salinibacter ruber (strain DSM 13855 / M31).